The chain runs to 145 residues: Ribonuclease VapC7 (145 aa).

The PINc domain maps to 2–129 (IVLDTTVLVY…PAFADLSDVV (128 aa)). 2 residues coordinate Mg(2+): Asp-5 and Asp-100.

Belongs to the PINc/VapC protein family. Mg(2+) serves as cofactor.

In terms of biological role, toxic component of a type II toxin-antitoxin (TA) system. An RNase. The cognate antitoxin is VapB7. In Mycobacterium tuberculosis (strain ATCC 25618 / H37Rv), this protein is Ribonuclease VapC7.